The following is a 943-amino-acid chain: Synaptotagmin-like protein 2 (943 aa).

The RabBD domain occupies 1–57 (MIDLSFLTEEEQEAIMKVLQRDAALKRAEEERVRHLPEKVKDDQQLKNMSGQWFYEA). Disordered stretches follow at residues 77-99 (RKKRPQVADEQSKDRANRAKESW), 118-291 (EEPE…VRFH), and 361-613 (ESDR…SNSG). Positions 82-99 (QVADEQSKDRANRAKESW) are enriched in basic and acidic residues. Residues 125–138 (APASPSSSVVNPVS) show a composition bias toward low complexity. The segment covering 174–192 (SQQTKNEQSKNGKTGLFQT) has biased composition (polar residues). Residues 194-205 (KEGELSESKEES) show a composition bias toward basic and acidic residues. Composition is skewed to polar residues over residues 382–394 (PQPSQYTNGLPFQ), 404–416 (KNETSQPTTSGSF), and 426–440 (EFLTTRAQSTENSHT). Basic and acidic residues predominate over residues 524–537 (ELVRSAEDDQKADQ). Over residues 549-560 (STVSSQPDNQFS) the composition is skewed to polar residues. The segment covering 603-613 (SSLTNLSSNSG) has biased composition (low complexity). 2 C2 domains span residues 637–762 (VKGS…LKWY) and 777–906 (NRGE…VDWM).

As to quaternary structure, monomer. Binds NRXN1. Binds RAB27A that has been activated by GTP-binding via its N-terminus. Interacts with RAB27B.

The protein resides in the cell membrane. Functionally, may act as a RAB27A effector protein and play a role in cytotoxic granule exocytosis in lymphocytes. This chain is Synaptotagmin-like protein 2 (SYTL2), found in Bos taurus (Bovine).